A 131-amino-acid polypeptide reads, in one-letter code: UPF0212 protein TK1194 (131 aa).

It belongs to the UPF0212 family.

The chain is UPF0212 protein TK1194 from Thermococcus kodakarensis (strain ATCC BAA-918 / JCM 12380 / KOD1) (Pyrococcus kodakaraensis (strain KOD1)).